The sequence spans 186 residues: MVFRAVSGKKFVAVKIFKMSTLKFMSIRKYIEGDQRFSKIRIDRNDIVPVWVRKEYTNLMALENAHVPAPKPIGFFKNILVMSYIGTKSGPAPQLKDVEIDEGIYDQVIDGMRRMYANRIVHADLSEYNMLFHRKVYFIDLAQAVDMDHPMAAEFLERDIVNVSNFFQKHGIETDPDKIREYIKKK.

Position 15 (K15) interacts with ATP. D124 acts as the Proton acceptor in catalysis. N129 and D140 together coordinate Mg(2+). D140 acts as the 4-aspartylphosphate intermediate in catalysis.

The protein belongs to the protein kinase superfamily. RIO-type Ser/Thr kinase family.

The catalysed reaction is L-seryl-[protein] + ATP = O-phospho-L-seryl-[protein] + ADP + H(+). It catalyses the reaction L-threonyl-[protein] + ATP = O-phospho-L-threonyl-[protein] + ADP + H(+). The enzyme catalyses ATP + H2O = ADP + phosphate + H(+). Functionally, despite the protein kinase domain is proposed to act predominantly as an ATPase. In Thermoplasma acidophilum (strain ATCC 25905 / DSM 1728 / JCM 9062 / NBRC 15155 / AMRC-C165), this protein is RIO-type serine/threonine-protein kinase Rio1 (rio1).